The sequence spans 430 residues: Trigger factor (430 aa).

The PPIase FKBP-type domain maps to 163–248 (GDIAVIDFEG…LNSLKRKNMP (86 aa)).

This sequence belongs to the FKBP-type PPIase family. Tig subfamily.

Its subcellular location is the cytoplasm. It catalyses the reaction [protein]-peptidylproline (omega=180) = [protein]-peptidylproline (omega=0). Functionally, involved in protein export. Acts as a chaperone by maintaining the newly synthesized protein in an open conformation. Functions as a peptidyl-prolyl cis-trans isomerase. The polypeptide is Trigger factor (Brevibacillus brevis (strain 47 / JCM 6285 / NBRC 100599)).